Reading from the N-terminus, the 520-residue chain is Tubby-related protein 2 (520 aa).

Phosphoserine occurs at positions 135 and 190. The disordered stretch occupies residues 141-236 (EVSVENGSVS…GTNSSAAHNE (96 aa)). A compositionally biased stretch (basic and acidic residues) spans 211 to 223 (QKEEDLEKKREAS). The segment covering 224–233 (ESTGTNSSAA) has biased composition (polar residues).

This sequence belongs to the TUB family. Strongly expressed in testis. Also expressed in retina. Expressed in cancer cell lines.

The protein localises to the cytoplasm. The protein resides in the secreted. This is Tubby-related protein 2 (TULP2) from Homo sapiens (Human).